Consider the following 427-residue polypeptide: tRNA(Ile)-lysidine synthase (427 aa).

27–32 contributes to the ATP binding site; the sequence is SGGVDS.

It belongs to the tRNA(Ile)-lysidine synthase family.

It is found in the cytoplasm. It catalyses the reaction cytidine(34) in tRNA(Ile2) + L-lysine + ATP = lysidine(34) in tRNA(Ile2) + AMP + diphosphate + H(+). Its function is as follows. Ligates lysine onto the cytidine present at position 34 of the AUA codon-specific tRNA(Ile) that contains the anticodon CAU, in an ATP-dependent manner. Cytidine is converted to lysidine, thus changing the amino acid specificity of the tRNA from methionine to isoleucine. This chain is tRNA(Ile)-lysidine synthase, found in Streptococcus equi subsp. zooepidemicus (strain H70).